The primary structure comprises 284 residues: Circadian clock oscillator protein KaiA (284 aa).

A psR domain, binds oxidized quinones region spans residues 1 to 135 (MLSQIAICIW…LRLAPVETMA (135 aa)). In terms of domain architecture, KaiA N-terminal spans 1-164 (MLSQIAICIW…DLAQRLQERL (164 aa)). A flexible linker region spans residues 165–173 (GYLGVYYKR). In terms of domain architecture, KaiA C-terminal spans 174 to 282 (DPDRFLRNLP…CEMYRRSIPR (109 aa)).

Belongs to the KaiA family. In terms of assembly, homodimer. The KaiABC complex composition changes during the circadian cycle to control KaiC phosphorylation. Complexes KaiC(6), KaiA(2-4):KaiC(6), KaiB(6):KaiC(6) and KaiC(6):KaiB(6):KaiA(12) are among the most important forms, many form cooperatively. The KaiA:KaiB complex is only found at 20-24 hours in the circadian cycle (subjective night). Binds to the C-terminal A-loop of KaiC via a coiled-coil structure. KaiA and CikA compete for binding to KaiB(fs). CikA copurifies with this protein in the clock complex. Interacts with LdpA.

Its activity is regulated as follows. Binding of oxidized quinones (produced as darkness falls) prevents KaiA from stimulating KaiC autophosphorylation. Functionally, key component of the KaiABC oscillator complex, which constitutes the main circadian regulator in cyanobacteria. Complex composition changes during the circadian cycle to control KaiC phosphorylation. KaiA stimulates KaiC autophosphorylation, while KaiB sequesters KaiA, leading to KaiC autodephosphorylation. KaiA binding to the KaiC CII domain during the subjective day yields KaiA(2-4):KaiC(6) complexes which stimulate KaiC autophosphorylation. A KaiA dimer is sufficient to enhance KaiC hexamer phosphorylation. Phospho-Ser-431 KaiC accumulation triggers binding of KaiB during the subjective night to form the KaiB(6):KaiC(6) complex, leading to changes in the output regulators CikA and SasA. KaiB(6):KaiC(6) formation exposes a site for KaiA binding on KaiB that sequesters KaiA from KaiC's CII domain, making the KaiC(6):KaiB(6):KaiA(12) complex resulting in KaiC autodephosphorylation. Complete dephosphorylation of KaiC leads to dissociation of KaiA(2):KaiB(1), completing 1 cycle of the Kai oscillator. Its function is as follows. Circadian oscillations can be generated in vitro by incubating KaiA, KaiB and KaiC with 1 mM ATP. The cycle is self-sustainable for at least 3 cycles and resistant to temperature changes. A very robust clock is reconstituted with KaiA, KaiB, KaiC, SasA, CikA and RpaA; output is measured by transcription from an appropriate reporter. In terms of biological role, kaiA binds oxidized quinones via its N-terminal PsR domain and is able to sense redox signals directly; quinone analog DBMIB (2,5-dibromo-3-methyl-6-isopropyl-p-benzoquinone) blocks KaiA stimulation of KaiC phosphorylation. The homodimer binds up to 8 quinones in the crystal structure, 3 in the PsR domain and 1 via the C-terminal helical bundle. Binding of oxidized quinone to the KaiA C-terminal domain reduces the phosphorylation of KaiC slightly; quinones may interact in a complex manner with KaiA to mediate clock input. In Synechococcus elongatus (strain ATCC 33912 / PCC 7942 / FACHB-805) (Anacystis nidulans R2), this protein is Circadian clock oscillator protein KaiA.